We begin with the raw amino-acid sequence, 328 residues long: Tetraacyldisaccharide 4'-kinase (328 aa).

An ATP-binding site is contributed by 59–66 (TAGGNGKT).

It belongs to the LpxK family.

It carries out the reaction a lipid A disaccharide + ATP = a lipid IVA + ADP + H(+). The protein operates within glycolipid biosynthesis; lipid IV(A) biosynthesis; lipid IV(A) from (3R)-3-hydroxytetradecanoyl-[acyl-carrier-protein] and UDP-N-acetyl-alpha-D-glucosamine: step 6/6. Transfers the gamma-phosphate of ATP to the 4'-position of a tetraacyldisaccharide 1-phosphate intermediate (termed DS-1-P) to form tetraacyldisaccharide 1,4'-bis-phosphate (lipid IVA). The polypeptide is Tetraacyldisaccharide 4'-kinase (Aliivibrio fischeri (strain ATCC 700601 / ES114) (Vibrio fischeri)).